A 546-amino-acid chain; its full sequence is Glutathione reductase (546 aa).

The transit peptide at 2–46 (YKHRYFHFFFFFFFFLVSTKIIRSFTFLNNNTNLSNPVYFKKKAN) directs the protein to the apicoplast. FAD contacts are provided by serine 58 and glycine 59. Serine 58 is a glutathione binding site. Glutathione is bound at residue arginine 65. The FAD site is built by glutamate 78, threonine 85, cysteine 86, and lysine 94. A disulfide bridge connects residues cysteine 86 and cysteine 91. Tyrosine 141 lines the glutathione pocket. Alanine 157 serves as a coordination point for FAD. NADP(+) is bound by residues isoleucine 233, glutamate 236, arginine 253, arginine 259, and glycine 318. Residues aspartate 358 and threonine 400 each contribute to the FAD site. Arginine 408 contacts glutathione. Valine 430 provides a ligand contact to NADP(+). Histidine 531 lines the FAD pocket. The active-site Proton acceptor is the histidine 531.

It belongs to the class-I pyridine nucleotide-disulfide oxidoreductase family. In terms of assembly, homodimer. It depends on FAD as a cofactor.

The protein resides in the cytoplasm. It is found in the plastid. The protein localises to the apicoplast. The catalysed reaction is 2 glutathione + NADP(+) = glutathione disulfide + NADPH + H(+). Functionally, catalyzes the reduction of glutathione disulfide (GSSG) to reduced glutathione (GSH). Constitutes the major mechanism to maintain a high GSH:GSSG ratio in the cytosol. This Plasmodium falciparum (isolate 3D7) protein is Glutathione reductase.